The sequence spans 635 residues: Threonine--tRNA ligase (635 aa).

Residues 1-61 (MISIRLKDGS…KEDGCLELLD (61 aa)) form the TGS domain. The interval 242 to 532 (DHRRLGRELG…LTEHFGGAFP (291 aa)) is catalytic. Zn(2+) contacts are provided by cysteine 333, histidine 384, and histidine 509.

This sequence belongs to the class-II aminoacyl-tRNA synthetase family. In terms of assembly, homodimer. The cofactor is Zn(2+).

Its subcellular location is the cytoplasm. The catalysed reaction is tRNA(Thr) + L-threonine + ATP = L-threonyl-tRNA(Thr) + AMP + diphosphate + H(+). Catalyzes the attachment of threonine to tRNA(Thr) in a two-step reaction: L-threonine is first activated by ATP to form Thr-AMP and then transferred to the acceptor end of tRNA(Thr). Also edits incorrectly charged L-seryl-tRNA(Thr). This Syntrophomonas wolfei subsp. wolfei (strain DSM 2245B / Goettingen) protein is Threonine--tRNA ligase.